We begin with the raw amino-acid sequence, 238 residues long: tRNA (guanine-N(7)-)-methyltransferase (238 aa).

S-adenosyl-L-methionine-binding residues include glutamate 68, glutamate 93, aspartate 120, and aspartate 143. Aspartate 143 is a catalytic residue. Residues lysine 147, aspartate 179, and 216-219 (TKFE) contribute to the substrate site.

It belongs to the class I-like SAM-binding methyltransferase superfamily. TrmB family.

It carries out the reaction guanosine(46) in tRNA + S-adenosyl-L-methionine = N(7)-methylguanosine(46) in tRNA + S-adenosyl-L-homocysteine. The protein operates within tRNA modification; N(7)-methylguanine-tRNA biosynthesis. Its function is as follows. Catalyzes the formation of N(7)-methylguanine at position 46 (m7G46) in tRNA. In Aliivibrio fischeri (strain MJ11) (Vibrio fischeri), this protein is tRNA (guanine-N(7)-)-methyltransferase.